The following is a 206-amino-acid chain: MKEQLKGLLDQAQINLSEAQIEQQLALVGLLDKWNKAYNLTSVRNPKDMLTRHIMDSLAVRQYLHGQRFIDVGTGPGLPGLPLAIAEPDNEFVLLDSLGKRIRFIRQVCHELKLTNVTAVQARVEDYQDEKQFDGVISRAFASLNDMLSWCEHLPAENGRFYALKGLYPQDELEQLPEQYKIESIEQINVPGIDASRHIVIISKRS.

Residues Gly73, Leu78, 124–125 (VE), and Arg139 each bind S-adenosyl-L-methionine.

This sequence belongs to the methyltransferase superfamily. RNA methyltransferase RsmG family.

The protein resides in the cytoplasm. It catalyses the reaction guanosine(527) in 16S rRNA + S-adenosyl-L-methionine = N(7)-methylguanosine(527) in 16S rRNA + S-adenosyl-L-homocysteine. In terms of biological role, specifically methylates the N7 position of guanine in position 527 of 16S rRNA. The polypeptide is Ribosomal RNA small subunit methyltransferase G (Idiomarina loihiensis (strain ATCC BAA-735 / DSM 15497 / L2-TR)).